The chain runs to 261 residues: MTDSAAPRLHVQALSADCAEAARRWAERLGLPLAADDEAEFAVQVGEQGLQVLQLGADSPGPVRVDFVEGASAHRRKFGGGSGQMIAKAVGVQPGIRPRVLDATAGLGRDGFVLASLGCEVTLVERQPLIAALLEDGLERARRDPDVAPIAARMRLLGGNSADLMRAWDGEAPQVVYLDPMFPHRDKSALVKKEMRLFRPLVGDDLDAPALLQAALALASHRVVVKRPRKAPIIEGPKPGYSLEGKSSRYDIYPKKALGKG.

Residues 109 to 110, 125 to 126, and aspartate 179 contribute to the S-adenosyl-L-methionine site; these read RD and ER.

It belongs to the methyltransferase superfamily. RsmJ family.

It localises to the cytoplasm. The enzyme catalyses guanosine(1516) in 16S rRNA + S-adenosyl-L-methionine = N(2)-methylguanosine(1516) in 16S rRNA + S-adenosyl-L-homocysteine + H(+). Its function is as follows. Specifically methylates the guanosine in position 1516 of 16S rRNA. The protein is Ribosomal RNA small subunit methyltransferase J of Pseudomonas aeruginosa (strain ATCC 15692 / DSM 22644 / CIP 104116 / JCM 14847 / LMG 12228 / 1C / PRS 101 / PAO1).